A 95-amino-acid polypeptide reads, in one-letter code: Alpha-conotoxin GeXXA (95 aa).

The N-terminal stretch at 1-21 is a signal peptide; sequence MPKQEKMMLVLLILPLPYCNA. Positions 22-45 are excised as a propeptide; the sequence is AGVTTVQWGGHGDGLDRYLQRGVR. Cystine bridges form between Cys-64–Cys-73, Cys-69–Cys-81, Cys-74–Cys-91, and Cys-79–Cys-93.

The protein belongs to the conotoxin D superfamily. Homodimer. Pseudo-homodimer (identical sequence, different post-translational modifications). As to expression, expressed by the venom duct.

It is found in the secreted. Its function is as follows. Alpha-D-conopeptides act as non-competitive inhibitors of nicotinic acetylcholine receptors (nAChR). Through its two C-terminal domains, this homodimeric protein would bind to two nAChR allosteric sites, located outside the nAChR C-loop of the principal binding face and at the adjacent binding interface in a clockwise direction. This toxin has strong inhibitory activity on rat alpha-9-alpha-10 (CHRNA9-CHRNA10) (IC(50)=1.2 nM) and a moderate inhibitory activity on human alpha-7 (CHRNA7) (IC(50)=210 nM), rat alpha-3-beta-2 (CHRNA3-CHRNB2) (IC(50)=498 nM), rat alpha-3-beta-4 (CHRNA3-CHRNB4) (IC(50)=614 nM) and rat alpha-1-beta-1-delta-epsilon (CHRNA1-CHRNB1-CHRNE-CHRND) (IC(50)=743 nM) subtypes. Shows a weaker inhibitory activity on human alpha-9-alpha-10 (IC(50)=28 nM) than on the rat channel. This is explained by a different residue in the probable binding site (His-31 in rat alpha-10 and Leu-31 in human). The polypeptide is Alpha-conotoxin GeXXA (Conus generalis (General cone)).